The sequence spans 283 residues: Thymidylate synthase (283 aa).

Residue Arg-22 coordinates dUMP. Residue Cys-160 is the Nucleophile of the active site. DUMP is bound by residues Arg-180–Asp-183, Asn-191, and His-221–Tyr-223. (6R)-5,10-methylene-5,6,7,8-tetrahydrofolate is bound at residue Asp-183. Ser-282 lines the (6R)-5,10-methylene-5,6,7,8-tetrahydrofolate pocket.

Belongs to the thymidylate synthase family. Bacterial-type ThyA subfamily. Homodimer.

It localises to the cytoplasm. It catalyses the reaction dUMP + (6R)-5,10-methylene-5,6,7,8-tetrahydrofolate = 7,8-dihydrofolate + dTMP. Its pathway is pyrimidine metabolism; dTTP biosynthesis. Its function is as follows. Catalyzes the reductive methylation of 2'-deoxyuridine-5'-monophosphate (dUMP) to 2'-deoxythymidine-5'-monophosphate (dTMP) while utilizing 5,10-methylenetetrahydrofolate (mTHF) as the methyl donor and reductant in the reaction, yielding dihydrofolate (DHF) as a by-product. This enzymatic reaction provides an intracellular de novo source of dTMP, an essential precursor for DNA biosynthesis. This Vibrio atlanticus (strain LGP32) (Vibrio splendidus (strain Mel32)) protein is Thymidylate synthase.